The primary structure comprises 570 residues: Urease subunit alpha (570 aa).

The region spanning 133-570 (GGIDNHIHYI…LPLAQLYNLF (438 aa)) is the Urease domain. His-138, His-140, and Lys-221 together coordinate Ni(2+). Lys-221 is subject to N6-carboxylysine. His-223 lines the substrate pocket. 2 residues coordinate Ni(2+): His-250 and His-276. His-324 (proton donor) is an active-site residue. Asp-364 serves as a coordination point for Ni(2+).

It belongs to the metallo-dependent hydrolases superfamily. Urease alpha subunit family. Heterotrimer of UreA (gamma), UreB (beta) and UreC (alpha) subunits. Three heterotrimers associate to form the active enzyme. The cofactor is Ni cation. Carboxylation allows a single lysine to coordinate two nickel ions.

It is found in the cytoplasm. It carries out the reaction urea + 2 H2O + H(+) = hydrogencarbonate + 2 NH4(+). Its pathway is nitrogen metabolism; urea degradation; CO(2) and NH(3) from urea (urease route): step 1/1. This chain is Urease subunit alpha, found in Cytophaga hutchinsonii (strain ATCC 33406 / DSM 1761 / CIP 103989 / NBRC 15051 / NCIMB 9469 / D465).